The following is a 199-amino-acid chain: Transgelin-3 (199 aa).

A Calponin-homology (CH) domain is found at 24-136 (ADLENKLVDW…RTLMALGSVA (113 aa)). Serine 163 bears the Phosphoserine mark. A Calponin-like repeat occupies 174 to 199 (IGLQMGSNKGASQAGMTGYGMPRQIM). A compositionally biased stretch (polar residues) spans 178 to 188 (MGSNKGASQAG). The segment at 178-199 (MGSNKGASQAGMTGYGMPRQIM) is disordered.

Belongs to the calponin family. As to expression, abundant and ubiquitous expression in neurons.

The protein is Transgelin-3 (Tagln3) of Rattus norvegicus (Rat).